A 255-amino-acid chain; its full sequence is Protein DOG1-like 2 (255 aa).

The 237-residue stretch at 10–246 (EKLQKRCYHE…HDRGRVRADV (237 aa)) folds into the DOG1 domain.

This Arabidopsis thaliana (Mouse-ear cress) protein is Protein DOG1-like 2.